Here is a 374-residue protein sequence, read N- to C-terminus: N5-carboxyaminoimidazole ribonucleotide synthase (374 aa).

Residues Arg108, Lys148, 153-159 (GYDGKGQ), 183-186 (EKYL), Glu191, His214, and 266-267 (NE) each bind ATP. Residues 112–296 (KETLKSAGTK…QFDTHILAVT (185 aa)) form the ATP-grasp domain.

This sequence belongs to the PurK/PurT family. In terms of assembly, homodimer.

The enzyme catalyses 5-amino-1-(5-phospho-beta-D-ribosyl)imidazole + hydrogencarbonate + ATP = 5-carboxyamino-1-(5-phospho-D-ribosyl)imidazole + ADP + phosphate + 2 H(+). It functions in the pathway purine metabolism; IMP biosynthesis via de novo pathway; 5-amino-1-(5-phospho-D-ribosyl)imidazole-4-carboxylate from 5-amino-1-(5-phospho-D-ribosyl)imidazole (N5-CAIR route): step 1/2. In terms of biological role, catalyzes the ATP-dependent conversion of 5-aminoimidazole ribonucleotide (AIR) and HCO(3)(-) to N5-carboxyaminoimidazole ribonucleotide (N5-CAIR). The protein is N5-carboxyaminoimidazole ribonucleotide synthase of Staphylococcus aureus (strain Mu50 / ATCC 700699).